A 2517-amino-acid chain; its full sequence is Cullin-9 (2517 aa).

Residue K87 forms a Glycyl lysine isopeptide (Lys-Gly) (interchain with G-Cter in ubiquitin) linkage. The span at 276 to 288 (SPELGAGDQSSPC) shows a compositional bias: polar residues. The disordered stretch occupies residues 276 to 296 (SPELGAGDQSSPCATREKSRG). A CPH domain is found at 366–439 (RSEFSSRSGY…HWHMLEILGP (74 aa)). Residues 576-589 (SNEPSSSSTSRNHS) are compositionally biased toward low complexity. The tract at residues 576–639 (SNEPSSSSTS…TETPMAQSDS (64 aa)) is disordered. Positions 593 to 609 (DPEEESKSEASFSEEET) are enriched in acidic residues. The segment covering 610 to 630 (ESLKAKAEAPKTEAEPTKTRT) has biased composition (basic and acidic residues). S976 is modified (phosphoserine). A DOC domain is found at 1143–1322 (PINIPFFDVF…RTCLFYTIRA (180 aa)). 1363-1370 (AAQALGKT) contributes to the ATP binding site. 2 disordered regions span residues 1432–1466 (VEPP…VLPS) and 1664–1685 (DEEE…AEKE). Residues 1433 to 1443 (EPPPGPSPEPS) are compositionally biased toward pro residues. A Phosphoserine modification is found at S1457. Residues 1649–1691 (LFQLQRLDKLFLEQEDEEEKRLEEEEEEEEEEEAEKELFIEDP) adopt a coiled-coil conformation. Residues 1664 to 1683 (DEEEKRLEEEEEEEEEEEAE) are compositionally biased toward acidic residues. A Glycyl lysine isopeptide (Lys-Gly) (interchain with G-Cter in NEDD8) cross-link involves residue K1881. The interval 2066–2283 (RPDHCPVCVS…KDYYNCSAMV (218 aa)) is TRIAD supradomain. 18 residues coordinate Zn(2+): C2070, C2073, C2088, H2090, C2093, C2096, C2115, C2120, C2160, C2166, C2181, C2184, C2189, C2192, H2198, C2203, C2236, and C2239. An RING-type 1 zinc finger spans residues 2070–2120 (CPVCVSPLGCDDDLPSLCCMHYCCKSCWNEYLTTRIEQNLVLNCTCPIADC). The IBR-type zinc-finger motif lies at 2140–2203 (SKYEKALLRG…FPEAHYPASC (64 aa)). The RING-type 2; atypical zinc finger occupies 2236–2265 (CPSCQAPIEKNEGCLHMTCAKCNHGFCWRC). C2249 is a catalytic residue. Zn(2+)-binding residues include C2254, C2257, C2262, C2265, H2273, and C2279. A coiled-coil region spans residues 2365 to 2385 (VEQQTENLELHTNALQILLEE). S2436 is modified (phosphoserine). The segment at 2442 to 2517 (WEAKGPNMPG…EEEDEDEAYD (76 aa)) is disordered. 2 stretches are compositionally biased toward acidic residues: residues 2461–2499 (EAEE…ENLD) and 2506–2517 (GDEEEDEDEAYD).

Belongs to the cullin family. As to quaternary structure, component of the Cul9-RING complex consisting of CUL9 and RBX1; the CUL9-RBX1 complex is a heterododecamer composed of six CUL9 and six RBX1 protomers. Interacts (via C-terminal TRIAD/RBR supradomain) with E2 ubiquitin-conjugating enzyme UBE2L3. Interacts with CUL7; the interaction with the CUL7 component of the 3M complex leads to inhibition of CUL9 activity. The CUL7-CUL9 heterodimer seems to interact specifically with TP53, likely via the CPH domain. Forms a complex with p53/TP53 in the cytoplasm of unstressed cells. Interacts with UBCH7 and UBCH8. Post-translationally, autoubiquitinated by the CUL9-RBX1 complex at Lys-87. In terms of processing, neddylated. Neddylation is mediated by E1 enzyme UBA3-NAE1 complex and E2 enzyme UBE2F. Structural rearrangment of the C-terminal TRIAD/RBR supradomain may play a role in neddylation and deneddylation. Ubiquitously expressed in all tissues with highest expression in testis brain and kidney.

The protein resides in the cytoplasm. Functionally, core component of a Cul9-RING ubiquitin-protein ligase complex composed of CUL9 and RBX1. The CUL9-RBX1 complex mediates ubiquitination and subsequent degradation of BIRC5 and is required to maintain microtubule dynamics and genome integrity. Acts downstream of the 3M complex, which inhibits the ubiquitination of BIRC5. The CUL9-RBX1 complex also mediates mono-ubiquitination of p53/TP53. Acts as a cytoplasmic anchor protein in p53/TP53-associated protein complex. Regulates the subcellular localization of p53/TP53 and its subsequent function. Ubiquitinates apurinic/apyrimidinic endodeoxyribonuclease APEX2. Ubiquitination by the CUL9-RBX1 complex is predominantly mediated by E2 ubiquitin-conjugating enzymes UBE2L3 and UBE2D2. This Homo sapiens (Human) protein is Cullin-9 (CUL9).